The chain runs to 666 residues: UvrABC system protein B (666 aa).

The region spanning 25-412 (EQVQAGAPYQ…EEQIVEQVIR (388 aa)) is the Helicase ATP-binding domain. 38 to 45 (GATGTGKT) is a binding site for ATP. The short motif at 91-114 (YYDYYQPEAYIPVTDTYIAKTASI) is the Beta-hairpin element. Residues 429 to 595 (QVDDLLAEIQ…PIIKRSSNAI (167 aa)) enclose the Helicase C-terminal domain. Residues 626 to 661 (PNLITQLEAQMKEAAKNLEFEEAAQYRDRIKKLRER) form the UVR domain.

Belongs to the UvrB family. As to quaternary structure, forms a heterotetramer with UvrA during the search for lesions. Interacts with UvrC in an incision complex.

It is found in the cytoplasm. Functionally, the UvrABC repair system catalyzes the recognition and processing of DNA lesions. A damage recognition complex composed of 2 UvrA and 2 UvrB subunits scans DNA for abnormalities. Upon binding of the UvrA(2)B(2) complex to a putative damaged site, the DNA wraps around one UvrB monomer. DNA wrap is dependent on ATP binding by UvrB and probably causes local melting of the DNA helix, facilitating insertion of UvrB beta-hairpin between the DNA strands. Then UvrB probes one DNA strand for the presence of a lesion. If a lesion is found the UvrA subunits dissociate and the UvrB-DNA preincision complex is formed. This complex is subsequently bound by UvrC and the second UvrB is released. If no lesion is found, the DNA wraps around the other UvrB subunit that will check the other stand for damage. This Synechococcus sp. (strain ATCC 27144 / PCC 6301 / SAUG 1402/1) (Anacystis nidulans) protein is UvrABC system protein B.